Here is a 551-residue protein sequence, read N- to C-terminus: Arginine--tRNA ligase (551 aa).

A 'HIGH' region motif is present at residues 125 to 135 (ANPTGPLHIGH).

It belongs to the class-I aminoacyl-tRNA synthetase family. Monomer.

Its subcellular location is the cytoplasm. It catalyses the reaction tRNA(Arg) + L-arginine + ATP = L-arginyl-tRNA(Arg) + AMP + diphosphate. The sequence is that of Arginine--tRNA ligase from Oleidesulfovibrio alaskensis (strain ATCC BAA-1058 / DSM 17464 / G20) (Desulfovibrio alaskensis).